We begin with the raw amino-acid sequence, 1499 residues long: DNA-directed RNA polymerase subunit beta' (1499 aa).

The Zn(2+) site is built by Cys-67, Cys-69, Cys-82, and Cys-85. Mg(2+)-binding residues include Asp-497, Asp-499, and Asp-501. Residues Cys-865, Cys-940, Cys-947, and Cys-950 each contribute to the Zn(2+) site. A disordered region spans residues 1475 to 1499; the sequence is YEPSQRAYQEDEYAKKEDGEIAIDD. The span at 1482–1493 shows a compositional bias: basic and acidic residues; that stretch reads YQEDEYAKKEDG.

Belongs to the RNA polymerase beta' chain family. In terms of assembly, the RNAP catalytic core consists of 2 alpha, 1 beta, 1 beta' and 1 omega subunit. When a sigma factor is associated with the core the holoenzyme is formed, which can initiate transcription. The cofactor is Mg(2+). Zn(2+) serves as cofactor.

It catalyses the reaction RNA(n) + a ribonucleoside 5'-triphosphate = RNA(n+1) + diphosphate. Functionally, DNA-dependent RNA polymerase catalyzes the transcription of DNA into RNA using the four ribonucleoside triphosphates as substrates. In Chloroherpeton thalassium (strain ATCC 35110 / GB-78), this protein is DNA-directed RNA polymerase subunit beta'.